We begin with the raw amino-acid sequence, 445 residues long: Fibrinogen gamma chain (445 aa).

Residues 1-25 form the signal peptide; that stretch reads MNWSLQLRSFILCWALLLLSPTGLA. Asn78 carries N-linked (GlcNAc...) asparagine glycosylation. The 247-residue stretch at 170–416 folds into the Fibrinogen C-terminal domain; it reads RIHDTTGKDC…ETTMKIIPFN (247 aa). Cys179 and Cys208 form a disulfide bridge. The Ca(2+) site is built by Asp344, Asp346, and Gly350. Cys352 and Cys365 are joined by a disulfide. A gamma-chain polymerization, binding amino end of another fibrin alpha chain region spans residues 400 to 422; that stretch reads TRWYSMKETTMKIIPFNRLSIGD. Gln424 participates in a covalent cross-link: Isoglutamyl lysine isopeptide (Gln-Lys) (interchain with K-432). Positions 424–445 are disordered; that stretch reads QQHHMGGSKQVSVEHEVDVEYP. Ser431 carries the phosphoserine modification. Lys432 is covalently cross-linked (Isoglutamyl lysine isopeptide (Lys-Gln) (interchain with Q-424)). Positions 435-445 are enriched in basic and acidic residues; that stretch reads SVEHEVDVEYP.

As to quaternary structure, heterohexamer; disulfide linked. Contains 2 sets of 3 non-identical chains (alpha, beta and gamma). The 2 heterotrimers are in head to head conformation with the N-termini in a small central domain. In terms of processing, conversion of fibrinogen to fibrin is triggered by thrombin, which cleaves fibrinopeptides A and B from alpha and beta chains, and thus exposes the N-terminal polymerization sites responsible for the formation of the soft clot. The soft clot is converted into the hard clot by factor XIIIA which catalyzes the epsilon-(gamma-glutamyl)lysine cross-linking between gamma chains (stronger) and between alpha chains (weaker) of different monomers.

The protein resides in the secreted. In terms of biological role, together with fibrinogen alpha (FGA) and fibrinogen beta (FGB), polymerizes to form an insoluble fibrin matrix. Has a major function in hemostasis as one of the primary components of blood clots. In addition, functions during the early stages of wound repair to stabilize the lesion and guide cell migration during re-epithelialization. Was originally thought to be essential for platelet aggregation, based on in vitro studies using anticoagulated blood. However, subsequent studies have shown that it is not absolutely required for thrombus formation in vivo. Enhances expression of SELP in activated platelets via an ITGB3-dependent pathway. Maternal fibrinogen is essential for successful pregnancy. Fibrin deposition is also associated with infection, where it protects against IFNG-mediated hemorrhage. May also facilitate the antibacterial immune response via both innate and T-cell mediated pathways. In Rattus norvegicus (Rat), this protein is Fibrinogen gamma chain (Fgg).